Reading from the N-terminus, the 365-residue chain is UDP-galactose transporter homolog 1 (365 aa).

Helical transmembrane passes span 42-62 (IIDL…WAVL) and 80-100 (ASLV…YAYL). Asparagine 115 is a glycosylation site (N-linked (GlcNAc...) asparagine). 2 consecutive transmembrane segments (helical) span residues 182–202 (YAVV…HAAP) and 206–226 (SGAG…SMLL). The N-linked (GlcNAc...) asparagine glycan is linked to asparagine 231. 4 helical membrane passes run 249–269 (VMCG…LTFS), 289–309 (DIVL…QTLE), 315–335 (VLVT…VVWF), and 339–359 (LTLG…FEAW).

It belongs to the nucleotide-sugar transporter family. SLC35B subfamily.

It is found in the endoplasmic reticulum membrane. In terms of biological role, may be involved in specific transport of UDP-Gal from the cytosol to the Golgi lumen. Involved in the maintenance of optimal conditions for the folding of secretory pathway proteins in the endoplasmic reticulum. The chain is UDP-galactose transporter homolog 1 (HUT1) from Yarrowia lipolytica (strain CLIB 122 / E 150) (Yeast).